A 348-amino-acid polypeptide reads, in one-letter code: Dihydroorotase (348 aa).

Zn(2+) is bound by residues H17 and H19. Substrate is bound by residues 19 to 21 (HLR) and N45. Zn(2+) is bound by residues K103, H140, and H178. An N6-carboxylysine modification is found at K103. H140 lines the substrate pocket. Position 223 (L223) interacts with substrate. D251 is a binding site for Zn(2+). D251 is a catalytic residue. H255 and A267 together coordinate substrate.

Belongs to the metallo-dependent hydrolases superfamily. DHOase family. Class II DHOase subfamily. As to quaternary structure, homodimer. Zn(2+) serves as cofactor.

It carries out the reaction (S)-dihydroorotate + H2O = N-carbamoyl-L-aspartate + H(+). It functions in the pathway pyrimidine metabolism; UMP biosynthesis via de novo pathway; (S)-dihydroorotate from bicarbonate: step 3/3. Catalyzes the reversible cyclization of carbamoyl aspartate to dihydroorotate. The sequence is that of Dihydroorotase from Salmonella newport (strain SL254).